We begin with the raw amino-acid sequence, 380 residues long: Cytochrome b (380 aa).

The next 4 membrane-spanning stretches (helical) occupy residues Phe34 to Met54, Trp78 to Ile99, Trp114 to Leu134, and Phe179 to Thr199. Residues His84 and His98 each contribute to the heme b site. Residues His183 and His197 each coordinate heme b. His202 is a binding site for a ubiquinone. 4 helical membrane-spanning segments follow: residues Leu227–Ser247, Leu289–His309, Leu321–Ser341, and Phe348–Pro368.

Belongs to the cytochrome b family. As to quaternary structure, the cytochrome bc1 complex contains 11 subunits: 3 respiratory subunits (MT-CYB, CYC1 and UQCRFS1), 2 core proteins (UQCRC1 and UQCRC2) and 6 low-molecular weight proteins (UQCRH/QCR6, UQCRB/QCR7, UQCRQ/QCR8, UQCR10/QCR9, UQCR11/QCR10 and a cleavage product of UQCRFS1). This cytochrome bc1 complex then forms a dimer. Heme b is required as a cofactor.

Its subcellular location is the mitochondrion inner membrane. In terms of biological role, component of the ubiquinol-cytochrome c reductase complex (complex III or cytochrome b-c1 complex) that is part of the mitochondrial respiratory chain. The b-c1 complex mediates electron transfer from ubiquinol to cytochrome c. Contributes to the generation of a proton gradient across the mitochondrial membrane that is then used for ATP synthesis. In Procellaria westlandica (Westland petrel), this protein is Cytochrome b (MT-CYB).